The following is a 463-amino-acid chain: Bifunctional protein HldE (463 aa).

Residues M1–T311 form a ribokinase region. Residue N191–E194 coordinates ATP. Residue D260 is part of the active site. The tract at residues F334 to D463 is cytidylyltransferase.

This sequence in the N-terminal section; belongs to the carbohydrate kinase PfkB family. It in the C-terminal section; belongs to the cytidylyltransferase family. As to quaternary structure, homodimer.

The catalysed reaction is D-glycero-beta-D-manno-heptose 7-phosphate + ATP = D-glycero-beta-D-manno-heptose 1,7-bisphosphate + ADP + H(+). It carries out the reaction D-glycero-beta-D-manno-heptose 1-phosphate + ATP + H(+) = ADP-D-glycero-beta-D-manno-heptose + diphosphate. The protein operates within nucleotide-sugar biosynthesis; ADP-L-glycero-beta-D-manno-heptose biosynthesis; ADP-L-glycero-beta-D-manno-heptose from D-glycero-beta-D-manno-heptose 7-phosphate: step 1/4. It participates in nucleotide-sugar biosynthesis; ADP-L-glycero-beta-D-manno-heptose biosynthesis; ADP-L-glycero-beta-D-manno-heptose from D-glycero-beta-D-manno-heptose 7-phosphate: step 3/4. Catalyzes the phosphorylation of D-glycero-D-manno-heptose 7-phosphate at the C-1 position to selectively form D-glycero-beta-D-manno-heptose-1,7-bisphosphate. Functionally, catalyzes the ADP transfer from ATP to D-glycero-beta-D-manno-heptose 1-phosphate, yielding ADP-D-glycero-beta-D-manno-heptose. The sequence is that of Bifunctional protein HldE from Helicobacter pylori (strain Shi470).